Consider the following 276-residue polypeptide: MDETKSTNLLTKRVIVGIDQTTVQHKGSLNQAEQDYIALEVPVALVYNGISHVVMMASPKNLELFAVGFSLSEGIIGSSNEIRSIEIVESCHGGTEVQIELSSRRFMQLKERRRSMAGRTGCGICGTEQLAEIFRPIAPLPFTQTFSLSLLDNALEQLKTVQEIGELTGCTHAAAWLSPEGQLQGGCEDVGRHVALDKLIGLKTQQKWTEGAILVSSRASYEMVQKSAMCGAEILFAVSAATSLAVEVANQYNLTLVGFCRRGRATVFTHPQRLTD.

Cys122 functions as the Cysteine persulfide intermediate in the catalytic mechanism. 259–264 is a binding site for Mo-bis(molybdopterin guanine dinucleotide); sequence FCRRGR.

It belongs to the FdhD family.

The protein localises to the cytoplasm. Required for formate dehydrogenase (FDH) activity. Acts as a sulfur carrier protein that transfers sulfur from IscS to the molybdenum cofactor prior to its insertion into FDH. In Proteus mirabilis (strain HI4320), this protein is Sulfur carrier protein FdhD.